A 342-amino-acid chain; its full sequence is Nucleoid-associated protein Shewmr4_2217 (342 aa).

This sequence belongs to the YejK family.

It is found in the cytoplasm. The protein resides in the nucleoid. The protein is Nucleoid-associated protein Shewmr4_2217 of Shewanella sp. (strain MR-4).